The primary structure comprises 360 residues: DNA replication and repair protein RecF (360 aa).

ATP is bound at residue 30 to 37 (GQNGSGKT).

This sequence belongs to the RecF family.

The protein resides in the cytoplasm. In terms of biological role, the RecF protein is involved in DNA metabolism; it is required for DNA replication and normal SOS inducibility. RecF binds preferentially to single-stranded, linear DNA. It also seems to bind ATP. The polypeptide is DNA replication and repair protein RecF (Shewanella baltica (strain OS223)).